Consider the following 299-residue polypeptide: Oxygen-dependent coproporphyrinogen-III oxidase (299 aa).

Residue Ser92 coordinates substrate. Positions 96 and 106 each coordinate a divalent metal cation. Catalysis depends on His106, which acts as the Proton donor. 108 to 110 is a binding site for substrate; the sequence is NVR. A divalent metal cation contacts are provided by His145 and His175. Positions 240–275 are important for dimerization; sequence YVEFNLVWDRGTLFGLQTGGRTESILMSMPPLVRWE. 258–260 contributes to the substrate binding site; that stretch reads GGR.

This sequence belongs to the aerobic coproporphyrinogen-III oxidase family. In terms of assembly, homodimer. It depends on a divalent metal cation as a cofactor.

It is found in the cytoplasm. The enzyme catalyses coproporphyrinogen III + O2 + 2 H(+) = protoporphyrinogen IX + 2 CO2 + 2 H2O. It participates in porphyrin-containing compound metabolism; protoporphyrin-IX biosynthesis; protoporphyrinogen-IX from coproporphyrinogen-III (O2 route): step 1/1. In terms of biological role, involved in the heme biosynthesis. Catalyzes the aerobic oxidative decarboxylation of propionate groups of rings A and B of coproporphyrinogen-III to yield the vinyl groups in protoporphyrinogen-IX. This chain is Oxygen-dependent coproporphyrinogen-III oxidase, found in Shigella flexneri.